We begin with the raw amino-acid sequence, 83 residues long: MKLVLAIVLILMLVSLSTGAEESGQEISMVGPPLYIWDPIPPCKQLDEDCGYGYSCCEDLSCQPLIEPDTMEITALVCQIESA.

The signal sequence occupies residues 1-19 (MKLVLAIVLILMLVSLSTG). The propeptide occupies 20–42 (AEESGQEISMVGPPLYIWDPIPP). Cystine bridges form between C43–C57, C50–C62, and C56–C78.

This sequence belongs to the conotoxin I3 superfamily. Expressed by the venom duct.

Its subcellular location is the secreted. The polypeptide is Conotoxin Pu6.1 (Conus pulicarius (Flea-bitten cone)).